Here is a 380-residue protein sequence, read N- to C-terminus: PqqA peptide cyclase (380 aa).

Positions 8–223 constitute a Radical SAM core domain; that stretch reads VNPPLWLLAE…VADYRQKMAA (216 aa). Positions 22, 26, and 29 each coordinate [4Fe-4S] cluster.

The protein belongs to the radical SAM superfamily. PqqE family. Interacts with PqqD. The interaction is necessary for activity of PqqE. Requires [4Fe-4S] cluster as cofactor.

It carries out the reaction [PQQ precursor protein] + S-adenosyl-L-methionine = E-Y cross-linked-[PQQ precursor protein] + 5'-deoxyadenosine + L-methionine + H(+). The protein operates within cofactor biosynthesis; pyrroloquinoline quinone biosynthesis. Catalyzes the cross-linking of a glutamate residue and a tyrosine residue in the PqqA protein as part of the biosynthesis of pyrroloquinoline quinone (PQQ). The chain is PqqA peptide cyclase from Klebsiella pneumoniae (strain 342).